A 591-amino-acid chain; its full sequence is MAAATSSIAPSLSCPSPSSSSKTLWSSKARTLALPNIGFLSSSSKSLRSLTATVAGNGATGSSLAARMVSSSAVKAPVSLDFETSVFKKEKVSLAGYEEYIVRGGRDLFKHLPDAFKGIKQIGVIGWGSQGPAQAQNLRDSLVEAKSDIVVKIGLRKGSRSFEEARAAGFTEESGTLGDIWETIAGSDLVLLLISDAAQADNYEKIFSHMKPNSILGLSHGFLLGHLQSSGLDFPKNISVVAVCPKGMGPSVRRLYVQGKEINGAGINASFAVHQDVDGRAADVALGWSVALGSPFTFATTLEQEYRSDIFGERGILLGAVHGIVESLFRRYTENGMSEDLAYKNTVECITGTISRTISTQGMLAVYNSLSEEGKKDFETAYSASFYPCMEILYECYEDVQSGSEIRSVVLAGRRFYEKEGLPAFPMGNIDQTRMWKVGERVRKSRPAGDLGPLYPFTAGVYVALMMAQIEILRKKGHSYSEIINESVIESVDSLNPFMHARGVSFMVDNCSTTARLGSRKWAPRFDYILTQQALVAVDSGAAINRDLISNFFSDPVHGAIEVCAQLRPTVDISVPADADFVRPELRQSSN.

Residues 1–20 (MAAATSSIAPSLSCPSPSSS) form a disordered region. The N-terminal 52 residues, 1–52 (MAAATSSIAPSLSCPSPSSSSKTLWSSKARTLALPNIGFLSSSSKSLRSLTA), are a transit peptide targeting the chloroplast. At threonine 53 the chain carries N-acetylthreonine. The KARI N-terminal Rossmann domain occupies 102–300 (VRGGRDLFKH…ALGSPFTFAT (199 aa)). Residues 123–130 (GVIGWGSQ), 156–161 (RKGSRS), and 195–199 (SDAAQ) contribute to the NADP(+) site. Histidine 220 is a catalytic residue. 2 KARI C-terminal knotted domains span residues 301–449 (TLEQ…RPAG) and 450–586 (DLGP…RPEL). The Mg(2+) site is built by aspartate 309, glutamate 313, glutamate 486, and glutamate 490. Serine 512 contacts substrate.

The protein belongs to the ketol-acid reductoisomerase family. As to quaternary structure, homodimer. It depends on Mg(2+) as a cofactor.

It is found in the plastid. It localises to the chloroplast. The enzyme catalyses (2R)-2,3-dihydroxy-3-methylbutanoate + NADP(+) = (2S)-2-acetolactate + NADPH + H(+). It carries out the reaction (2R,3R)-2,3-dihydroxy-3-methylpentanoate + NADP(+) = (S)-2-ethyl-2-hydroxy-3-oxobutanoate + NADPH + H(+). It participates in amino-acid biosynthesis; L-isoleucine biosynthesis; L-isoleucine from 2-oxobutanoate: step 2/4. It functions in the pathway amino-acid biosynthesis; L-valine biosynthesis; L-valine from pyruvate: step 2/4. The chain is Ketol-acid reductoisomerase, chloroplastic from Arabidopsis thaliana (Mouse-ear cress).